The chain runs to 204 residues: Superoxide dismutase [Mn] (204 aa).

4 residues coordinate Mn(2+): His29, His84, Asp167, and His171.

The protein belongs to the iron/manganese superoxide dismutase family. In terms of assembly, homotetramer. The cofactor is Mn(2+).

The enzyme catalyses 2 superoxide + 2 H(+) = H2O2 + O2. Functionally, destroys superoxide anion radicals which are normally produced within the cells and which are toxic to biological systems. The protein is Superoxide dismutase [Mn] (sodA) of Thermus aquaticus.